Here is a 500-residue protein sequence, read N- to C-terminus: Pyruvate kinase 1 (500 aa).

The residue at position 2 (S2) is an N-acetylserine. 2 positions are modified to phosphoserine: S9 and S16. T31 is modified (phosphothreonine). Position 49 (R49) interacts with substrate. Residues N51 and S53 each coordinate K(+). Residue 51 to 54 participates in ATP binding; that stretch reads NFSH. S70 is modified (phosphoserine). D84 and T85 together coordinate K(+). Residue R91 coordinates ATP. Glycyl lysine isopeptide (Lys-Gly) (interchain with G-Cter in URM1) cross-links involve residues K119, K124, K161, K164, and K166. Residue K177 coordinates ATP. A Phosphothreonine modification is found at T184. A Glycyl lysine isopeptide (Lys-Gly) (interchain with G-Cter in ubiquitin) cross-link involves residue K204. S213 is modified (phosphoserine). K240 is a substrate binding site. E242 contributes to the Mn(2+) binding site. A Glycyl lysine isopeptide (Lys-Gly) (interchain with G-Cter in ubiquitin) cross-link involves residue K255. G265 and D266 together coordinate substrate. D266 lines the Mn(2+) pocket. K292 participates in a covalent cross-link: Glycyl lysine isopeptide (Lys-Gly) (interchain with G-Cter in URM1). T298 contributes to the substrate binding site. S316 carries the phosphoserine modification. K394 participates in a covalent cross-link: Glycyl lysine isopeptide (Lys-Gly) (interchain with G-Cter in URM1). 402–407 contacts beta-D-fructose 1,6-bisphosphate; it reads STSGTT. C418 bears the Cysteine persulfide mark. A Glycyl lysine isopeptide (Lys-Gly) (interchain with G-Cter in ubiquitin); alternate cross-link involves residue K446. K446 participates in a covalent cross-link: Glycyl lysine isopeptide (Lys-Gly) (interchain with G-Cter in URM1); alternate. Residue S450 is modified to Phosphoserine. Beta-D-fructose 1,6-bisphosphate contacts are provided by W452 and R459. Phosphothreonine is present on T478. Residue G484 participates in beta-D-fructose 1,6-bisphosphate binding.

Belongs to the pyruvate kinase family. In terms of assembly, homotetramer. Requires Mg(2+) as cofactor. K(+) serves as cofactor. Post-translationally, conjugated to URM1, a ubiquitin-like protein, in response to oxidative stresses. The attachment of URM1 to lysine residues exclusively depends on the presence of a peroxidatic cysteine in the target protein, with low specificity for the particular residue, motif, or structural context at which urmylation can occur. The URM1-conjugation reaction is mechanistically and directly coupled to the process of cysteine persulfidation, transfering the sulfur atom of the URM1 thiocarboxyl group to redox-active cysteine residues in the target protein if it is exposed to oxidative conditions. Persulfidated on specific redox-active cysteine residues. Persulfidation (also called protein S-sulfhydration) may provide a molecular mechanism that enables cells to protect vulnerable cysteine residues from reactive oxygen species (ROS) under stress conditions.

The catalysed reaction is pyruvate + ATP = phosphoenolpyruvate + ADP + H(+). It functions in the pathway carbohydrate degradation; glycolysis; pyruvate from D-glyceraldehyde 3-phosphate: step 5/5. Its activity is regulated as follows. The activity is regulated by glucose levels. Activated by fructose-1,6-bisphosphate. This chain is Pyruvate kinase 1 (CDC19), found in Saccharomyces cerevisiae (strain ATCC 204508 / S288c) (Baker's yeast).